A 344-amino-acid chain; its full sequence is Ribosomal RNA large subunit methyltransferase Cfr (344 aa).

Glu-88 serves as the catalytic Proton acceptor. Residues 95–324 (KKGWESFCIS…HANGISVATR (230 aa)) enclose the Radical SAM core domain. Cysteines 102 and 335 form a disulfide. Residues Cys-109, Cys-113, and Cys-116 each coordinate [4Fe-4S] cluster. Residues 155-156 (GE), Ser-186, 209-211 (SLH), and Asn-290 each bind S-adenosyl-L-methionine. Cys-335 serves as the catalytic S-methylcysteine intermediate.

It belongs to the radical SAM superfamily. RlmN family. Cfr subfamily. Requires [4Fe-4S] cluster as cofactor.

It is found in the cytoplasm. The catalysed reaction is adenosine(2503) in 23S rRNA + 2 reduced [2Fe-2S]-[ferredoxin] + 2 S-adenosyl-L-methionine = 8-methyladenosine(2503) in 23S rRNA + 5'-deoxyadenosine + L-methionine + 2 oxidized [2Fe-2S]-[ferredoxin] + S-adenosyl-L-homocysteine. Functionally, specifically methylates position 8 of adenine 2503 in 23S rRNA. Confers resistance to some classes of antibiotics. The chain is Ribosomal RNA large subunit methyltransferase Cfr from Lachnoclostridium phytofermentans (strain ATCC 700394 / DSM 18823 / ISDg) (Clostridium phytofermentans).